The sequence spans 175 residues: Large ribosomal subunit protein uL15 (175 aa).

Residues 1–13 (MTIKLNELRDNNG) are compositionally biased toward basic and acidic residues. Disordered stretches follow at residues 1–44 (MTIK…KARS) and 150–175 (VELP…AKNA). A compositionally biased stretch (gly residues) spans 23-37 (RGIGSGKGKTAGRGQ).

It belongs to the universal ribosomal protein uL15 family. As to quaternary structure, part of the 50S ribosomal subunit.

Functionally, binds to the 23S rRNA. This Sphingopyxis alaskensis (strain DSM 13593 / LMG 18877 / RB2256) (Sphingomonas alaskensis) protein is Large ribosomal subunit protein uL15.